We begin with the raw amino-acid sequence, 414 residues long: tRNA methyltransferase 10 homolog C (414 aa).

The transit peptide at 1-35 (MNVTVRFLRPFARCLVPYTFHRKRSHLYSGVLQRY) directs the protein to the mitochondrion. S79 is subject to Phosphoserine. A coiled-coil region spans residues 133–171 (GKEKAKKAKQVKKEMKAEAREEAKRARLLETTAEEQQQD). The SAM-dependent MTase TRM10-type domain occupies 186–378 (LGWKGVQAMQ…KFVPRRKHTG (193 aa)).

This sequence belongs to the class IV-like SAM-binding methyltransferase superfamily. TRM10 family. In terms of assembly, component of mitochondrial ribonuclease P, a complex composed of TRMT10C/MRPP1, HSD17B10/MRPP2 and PRORP/MRPP3. Interacts with HSD17B10/MRPP2; forming the MRPP1-MRPP2 subcomplex of the mitochondrial ribonuclease P complex. Interacts with GRSF1.

Its subcellular location is the mitochondrion matrix. It is found in the mitochondrion nucleoid. The enzyme catalyses adenosine(9) in tRNA + S-adenosyl-L-methionine = N(1)-methyladenosine(9) in tRNA + S-adenosyl-L-homocysteine + H(+). The catalysed reaction is guanosine(9) in tRNA + S-adenosyl-L-methionine = N(1)-methylguanosine(9) in tRNA + S-adenosyl-L-homocysteine + H(+). It carries out the reaction an adenosine in mRNA + S-adenosyl-L-methionine = an N(1)-methyladenosine in mRNA + S-adenosyl-L-homocysteine + H(+). Functionally, mitochondrial tRNA N(1)-methyltransferase involved in mitochondrial tRNA maturation. Component of mitochondrial ribonuclease P, a complex composed of TRMT10C/MRPP1, HSD17B10/MRPP2 and PRORP/MRPP3, which cleaves tRNA molecules in their 5'-ends. Together with HSD17B10/MRPP2, forms a subcomplex of the mitochondrial ribonuclease P, named MRPP1-MRPP2 subcomplex, which displays functions that are independent of the ribonuclease P activity. The MRPP1-MRPP2 subcomplex catalyzes the formation of N(1)-methylguanine and N(1)-methyladenine at position 9 (m1G9 and m1A9, respectively) in tRNAs; TRMT10C/MRPP1 acting as the catalytic N(1)-methyltransferase subunit. The MRPP1-MRPP2 subcomplex also acts as a tRNA maturation platform: following 5'-end cleavage by the mitochondrial ribonuclease P complex, the MRPP1-MRPP2 subcomplex enhances the efficiency of 3'-processing catalyzed by ELAC2, retains the tRNA product after ELAC2 processing and presents the nascent tRNA to the mitochondrial CCA tRNA nucleotidyltransferase TRNT1 enzyme. In addition to tRNA N(1)-methyltransferase activity, TRMT10C/MRPP1 also acts as a mRNA N(1)-methyltransferase by mediating methylation of adenosine residues at the N(1) position of MT-ND5 mRNA. Associates with mitochondrial DNA complexes at the nucleoids to initiate RNA processing and ribosome assembly. The sequence is that of tRNA methyltransferase 10 homolog C from Mus musculus (Mouse).